The chain runs to 128 residues: Sulfurtransferase TusD (128 aa).

Residue cysteine 78 is the Cysteine persulfide intermediate of the active site.

This sequence belongs to the DsrE/TusD family. Heterohexamer, formed by a dimer of trimers. The hexameric TusBCD complex contains 2 copies each of TusB, TusC and TusD. The TusBCD complex interacts with TusE.

Its subcellular location is the cytoplasm. In terms of biological role, part of a sulfur-relay system required for 2-thiolation of 5-methylaminomethyl-2-thiouridine (mnm(5)s(2)U) at tRNA wobble positions. Accepts sulfur from TusA and transfers it in turn to TusE. The polypeptide is Sulfurtransferase TusD (Shigella flexneri serotype 5b (strain 8401)).